A 122-amino-acid polypeptide reads, in one-letter code: MSLLDTGARYQTCIVYPEEMVIDSDGNKRTRPSNTGIPAIARFQVANQSGTSARRAEQDNEGFETEKVYRMRFPRSFTKEHGILGAQSQIEWRDQRWALFGDATVYDSSPALARVDYTIKRY.

This Mycobacterium (Mycobacteriophage L5) protein is Gene 20 protein (20).